A 283-amino-acid chain; its full sequence is tRNA pseudouridine synthase B (283 aa).

The Nucleophile role is filled by D38.

Belongs to the pseudouridine synthase TruB family. Type 1 subfamily.

The catalysed reaction is uridine(55) in tRNA = pseudouridine(55) in tRNA. Its function is as follows. Responsible for synthesis of pseudouridine from uracil-55 in the psi GC loop of transfer RNAs. The sequence is that of tRNA pseudouridine synthase B from Onion yellows phytoplasma (strain OY-M).